We begin with the raw amino-acid sequence, 278 residues long: Phosphonates import ATP-binding protein PhnC (278 aa).

The region spanning 25–273 is the ABC transporter domain; the sequence is LAVKGLVKAY…IIQDIYSDES (249 aa). 58–65 lines the ATP pocket; that stretch reads GRSGAGKS.

It belongs to the ABC transporter superfamily. Phosphonates importer (TC 3.A.1.9.1) family. As to quaternary structure, the complex is composed of two ATP-binding proteins (PhnC), two transmembrane proteins (PhnE) and a solute-binding protein (PhnD).

The protein localises to the cell inner membrane. It catalyses the reaction phosphonate(out) + ATP + H2O = phosphonate(in) + ADP + phosphate + H(+). Part of the ABC transporter complex PhnCDE involved in phosphonates import. Responsible for energy coupling to the transport system. In Yersinia pestis bv. Antiqua (strain Antiqua), this protein is Phosphonates import ATP-binding protein PhnC.